The sequence spans 193 residues: Probable chemoreceptor glutamine deamidase CheD 1 (193 aa).

Positions 1-26 (MPHTPPAYPAASADHRPPSSPPAEPA) are disordered.

It belongs to the CheD family.

It carries out the reaction L-glutaminyl-[protein] + H2O = L-glutamyl-[protein] + NH4(+). Its function is as follows. Probably deamidates glutamine residues to glutamate on methyl-accepting chemotaxis receptors (MCPs), playing an important role in chemotaxis. The chain is Probable chemoreceptor glutamine deamidase CheD 1 from Chromobacterium violaceum (strain ATCC 12472 / DSM 30191 / JCM 1249 / CCUG 213 / NBRC 12614 / NCIMB 9131 / NCTC 9757 / MK).